We begin with the raw amino-acid sequence, 57 residues long: uncharacterized protein (57 aa).

The tract at residues 1–57 (MPHYVVVKSPMRRRRSPRRRSPRVCYSPRRVACSPRRRSPRRRSPRRRSPRRSIVVY) is disordered. The segment covering 10 to 22 (PMRRRRSPRRRSP) has biased composition (basic residues). Positions 23-34 (RVCYSPRRVACS) are enriched in low complexity. The span at 35-51 (PRRRSPRRRSPRRRSPR) shows a compositional bias: basic residues.

This is an uncharacterized protein from Acheta domesticus (House cricket).